Here is a 305-residue protein sequence, read N- to C-terminus: Glycine--tRNA ligase alpha subunit (305 aa).

The protein belongs to the class-II aminoacyl-tRNA synthetase family. Tetramer of two alpha and two beta subunits.

It localises to the cytoplasm. It carries out the reaction tRNA(Gly) + glycine + ATP = glycyl-tRNA(Gly) + AMP + diphosphate. The chain is Glycine--tRNA ligase alpha subunit from Heliobacterium modesticaldum (strain ATCC 51547 / Ice1).